Consider the following 288-residue polypeptide: Syntaxin PEP12 (288 aa).

Over Met1–Arg268 the chain is Cytoplasmic. Ser2 and Ser23 each carry phosphoserine. In terms of domain architecture, t-SNARE coiled-coil homology spans Gln195–Ala257. Residues Val269 to Leu288 form a helical; Anchor for type IV membrane protein membrane-spanning segment.

Belongs to the syntaxin family. In terms of processing, ubiquitinated.

The protein resides in the membrane. Plays a role in the sorting and targeting of vacuolar proteases. The polypeptide is Syntaxin PEP12 (PEP12) (Saccharomyces cerevisiae (strain ATCC 204508 / S288c) (Baker's yeast)).